Reading from the N-terminus, the 132-residue chain is Small ribosomal subunit protein uS8 (132 aa).

The protein belongs to the universal ribosomal protein uS8 family. In terms of assembly, part of the 30S ribosomal subunit. Contacts proteins S5 and S12.

One of the primary rRNA binding proteins, it binds directly to 16S rRNA central domain where it helps coordinate assembly of the platform of the 30S subunit. In Rhodospirillum centenum (strain ATCC 51521 / SW), this protein is Small ribosomal subunit protein uS8.